Here is a 372-residue protein sequence, read N- to C-terminus: DNA replication and repair protein RecF (372 aa).

30 to 37 provides a ligand contact to ATP; that stretch reads GENAQGKT.

Belongs to the RecF family.

Its subcellular location is the cytoplasm. Functionally, the RecF protein is involved in DNA metabolism; it is required for DNA replication and normal SOS inducibility. RecF binds preferentially to single-stranded, linear DNA. It also seems to bind ATP. This is DNA replication and repair protein RecF from Shouchella clausii (strain KSM-K16) (Alkalihalobacillus clausii).